The chain runs to 380 residues: MSDSPIKYRLIKKEKHTGARLGEIITPHGTFPTPMFMPVGTQATVKTQSPEELKEMGSGIILSNTYHLWLRPGDELIARAGGLHKFMNWDQPILTDSGGFQVYSLADSRNITEEGVTFKNHLNGSKMFLSPEKAISIQNNLGSDIMMSFDECPQFYQPYDYVKKSIERTSRWAERGLKAHRRPHDQGLFGIVQGAGFEDLRRQSAHDLVSMDFSGYSIGGLAVGETHEEMNAVLDFTTQLLPENKPRYLMGVGAPDSLIDGVIRGVDMFDCVLPTRIARNGTCMTSQGRLVVKNAQFAEDFTPLDPECDCYTCNNYTRAYLRHLLKADETFGIRLTSYHNLYFLLNLMKQVRQAIMDDNLLEFREYFVEKYGYNKSGRNF.

The active-site Proton acceptor is the Asp96. Substrate contacts are provided by residues 96–100 (DSGGF), Asp150, Gln193, and Gly220. The RNA binding stretch occupies residues 251 to 257 (GVGAPDS). Residue Asp270 is the Nucleophile of the active site. The tract at residues 275–279 (TRIAR) is RNA binding; important for wobble base 34 recognition. Zn(2+) contacts are provided by Cys308, Cys310, Cys313, and His339.

Belongs to the queuine tRNA-ribosyltransferase family. Homodimer. Within each dimer, one monomer is responsible for RNA recognition and catalysis, while the other monomer binds to the replacement base PreQ1. Requires Zn(2+) as cofactor.

It catalyses the reaction 7-aminomethyl-7-carbaguanine + guanosine(34) in tRNA = 7-aminomethyl-7-carbaguanosine(34) in tRNA + guanine. The protein operates within tRNA modification; tRNA-queuosine biosynthesis. In terms of biological role, catalyzes the base-exchange of a guanine (G) residue with the queuine precursor 7-aminomethyl-7-deazaguanine (PreQ1) at position 34 (anticodon wobble position) in tRNAs with GU(N) anticodons (tRNA-Asp, -Asn, -His and -Tyr). Catalysis occurs through a double-displacement mechanism. The nucleophile active site attacks the C1' of nucleotide 34 to detach the guanine base from the RNA, forming a covalent enzyme-RNA intermediate. The proton acceptor active site deprotonates the incoming PreQ1, allowing a nucleophilic attack on the C1' of the ribose to form the product. After dissociation, two additional enzymatic reactions on the tRNA convert PreQ1 to queuine (Q), resulting in the hypermodified nucleoside queuosine (7-(((4,5-cis-dihydroxy-2-cyclopenten-1-yl)amino)methyl)-7-deazaguanosine). This is Queuine tRNA-ribosyltransferase from Streptococcus pneumoniae (strain ATCC BAA-255 / R6).